A 365-amino-acid chain; its full sequence is Peptide chain release factor 2 (365 aa).

The residue at position 252 (Gln-252) is an N5-methylglutamine.

This sequence belongs to the prokaryotic/mitochondrial release factor family. Methylated by PrmC. Methylation increases the termination efficiency of RF2.

Its subcellular location is the cytoplasm. In terms of biological role, peptide chain release factor 2 directs the termination of translation in response to the peptide chain termination codons UGA and UAA. The protein is Peptide chain release factor 2 of Escherichia coli (strain K12 / MC4100 / BW2952).